The following is a 277-amino-acid chain: Large ribosomal subunit protein uL2 (277 aa).

Disordered stretches follow at residues 35-60 (EKQS…GHKQ) and 225-277 (MNPV…ANKR). Residues 43-53 (RNNNGHITTRH) are compositionally biased toward polar residues.

This sequence belongs to the universal ribosomal protein uL2 family. As to quaternary structure, part of the 50S ribosomal subunit. Forms a bridge to the 30S subunit in the 70S ribosome.

In terms of biological role, one of the primary rRNA binding proteins. Required for association of the 30S and 50S subunits to form the 70S ribosome, for tRNA binding and peptide bond formation. It has been suggested to have peptidyltransferase activity; this is somewhat controversial. Makes several contacts with the 16S rRNA in the 70S ribosome. The sequence is that of Large ribosomal subunit protein uL2 from Methylobacillus flagellatus (strain ATCC 51484 / DSM 6875 / VKM B-1610 / KT).